The primary structure comprises 664 residues: uncharacterized protein (664 aa).

This is an uncharacterized protein from Mycoplasma pneumoniae (strain ATCC 29342 / M129 / Subtype 1) (Mycoplasmoides pneumoniae).